The primary structure comprises 609 residues: RAS guanyl-releasing protein 2 (609 aa).

Ala-2 carries the N-myristoyl glycine lipid modification. The N-terminal Ras-GEF domain maps to 4 to 126 (TLDLDKGCTV…SLIDIDSVPT (123 aa)). A lipid anchor (S-palmitoyl cysteine) is attached at Leu-7. Ser-116, Ser-117, and Ser-147 each carry phosphoserine. The Ras-GEF domain occupies 154–387 (EPMELAEHLT…YQLSLQREPR (234 aa)). The segment at 382-406 (LQREPRSKSSPTSPTSCTPPPRPPV) is disordered. 2 consecutive EF-hand domains span residues 426–461 (HIEK…FPYL) and 455–490 (RGNF…SSSV). Asp-439, Asp-441, Asp-443, His-445, Glu-450, Asp-468, Asn-470, Asp-472, Cys-474, and Glu-479 together coordinate Ca(2+). Residues 498–548 (VHNFQESNSLRPVACRHCKALILGIYKQGLKCRACGVNCHKQCKDRLSVEC) form a Phorbol-ester/DAG-type zinc finger. Phosphoserine is present on residues Ser-554 and Ser-576. The tract at residues 557 to 592 (LEGSAPSPSPMHSHHHRAFSFSLPRPGRRGSRPPEI) is disordered.

It belongs to the RASGRP family. As to quaternary structure, forms a signaling complex with RAP1 and BRAF. Interacts with RAP1. Interacts with F-actin. Post-translationally, isoform 2 is palmitoylated and myristoylated. As to expression, detected in platelets, neutrophils and T lymphocytes (at protein level). Expressed in brain where it is enriched in the striatum. Also expressed in the hematopoietic system. Detected in heart, brain, lung, placenta, liver, skeletal muscle and kidney.

It localises to the cytoplasm. It is found in the cytosol. Its subcellular location is the cell membrane. The protein localises to the synapse. The protein resides in the synaptosome. It localises to the cell projection. It is found in the ruffle membrane. Isoform 1 and isoform 2 are differently regulated by calcium and DAG. In terms of biological role, functions as a calcium- and DAG-regulated nucleotide exchange factor specifically activating Rap through the exchange of bound GDP for GTP. May also activate other GTPases such as RRAS, RRAS2, NRAS, KRAS but not HRAS. Functions in aggregation of platelets and adhesion of T-lymphocytes and neutrophils probably through inside-out integrin activation. May function in the muscarinic acetylcholine receptor M1/CHRM1 signaling pathway. This chain is RAS guanyl-releasing protein 2 (RASGRP2), found in Homo sapiens (Human).